A 381-amino-acid polypeptide reads, in one-letter code: Guanine nucleotide-binding protein G(olf) subunit alpha (381 aa).

Residues 1 to 25 (MGCLGNSSKTAEDQGVDEKERREAN) are disordered. Gly-2 carries N-palmitoyl glycine lipidation. Cys-3 carries the S-palmitoyl cysteine lipid modification. The segment covering 10–25 (TAEDQGVDEKERREAN) has biased composition (basic and acidic residues). In terms of domain architecture, G-alpha spans 41–381 (ATHRLLLLGA…RMHLKQYELL (341 aa)). A G1 motif region spans residues 44-57 (RLLLLGAGESGKST). Positions 52, 53, 54, 55, 56, and 57 each coordinate GTP. Ser-56 is a Mg(2+) binding site. At Thr-178 the chain carries Phosphothreonine. The G2 motif stretch occupies residues 183–191 (DLLRCRVLT). Residues Leu-185, Arg-186, and Thr-191 each coordinate GTP. Thr-191 and Asp-210 together coordinate Mg(2+). Residues 206 to 215 (FHMFDVGGQR) form a G3 motif region. Gly-213, Asn-279, Lys-280, Asp-282, and Ala-353 together coordinate GTP. The interval 275–282 (ILFLNKQD) is G4 motif. The tract at residues 351-356 (TCAVDT) is G5 motif.

It belongs to the G-alpha family. G(s) subfamily. In terms of assembly, g proteins are composed of 3 units; alpha, beta and gamma. The alpha chain contains the guanine nucleotide binding site. Interacts with GAS2L2. Interacts (GDP-bound form) with RIC8B (via C-terminus); promoting GNAL folding and association with the plasma membrane.

It is found in the cell membrane. The enzyme catalyses GTP + H2O = GDP + phosphate + H(+). Guanine nucleotide-binding protein (G protein) involved as transducer in olfactory signal transduction controlled by G protein-coupled receptors (GPCRs). Contains the guanine nucleotide binding site and alternates between an active, GTP-bound state and an inactive, GDP-bound state. Signaling by an activated GPCR promotes GDP release and GTP binding. The alpha subunit has a low GTPase activity that converts bound GTP to GDP, thereby terminating the signal. Both GDP release and GTP hydrolysis are modulated by numerous regulatory proteins. GNAL/G(olf) alpha specifically mediates olfactory signal transduction within the olfactory neuroepithelium and the basal ganglia following GPCRs activation. Acts by promoting the specific activation of adenylyl cyclase ADCY3, resulting in increased levels of the signaling molecule cAMP. This Rattus norvegicus (Rat) protein is Guanine nucleotide-binding protein G(olf) subunit alpha.